The chain runs to 714 residues: Centromere/kinetochore protein zw10 (714 aa).

This sequence belongs to the ZW10 family.

It is found in the cytoplasm. The protein localises to the nucleus. The protein resides in the chromosome. It localises to the centromere. Its subcellular location is the kinetochore. In terms of biological role, required for accurate chromosome segregation. The protein is Centromere/kinetochore protein zw10 (mit(1)15) of Drosophila grimshawi (Hawaiian fruit fly).